We begin with the raw amino-acid sequence, 336 residues long: MKLILREYNLKLKHTFTISRESIDFQPSLIVELQSEGFSGFGEATSNPYYNITVPMMMQDLEKIRSIIEDTENETPDVFWAKIHPYLKNDMFALCALDLAYNDLYARKKGKKLYELWNYTTERNPMTDYTIGIASIDKMVSKMQELPWPIYKIKLGTKEDIEIVKELRKHTNAVFRIDANCGWGVEETINNSVELKKLGVEFLEQPMKADNWEGHKEVFKHSVLPVIADESCIIEEDVAKCFNHFHGVNVKLVKCGGLTPGKRMIEEAKKLGLRTMVGCMTESTVGISAIAHLLPQLDYVDMDGALLLAEDIATGVTIKDGVVSYSNLNGTGVTLL.

Substrate-binding positions include T130 and 152-154 (KIK). Mg(2+) is bound by residues D178, E204, and D229. Residues K251 and 301-303 (DMD) contribute to the substrate site.

It belongs to the mandelate racemase/muconate lactonizing enzyme family. It depends on Mg(2+) as a cofactor.

Its function is as follows. Catalyzes the epimerization of D-Ala-D-Ala to D-Ala-L-Ala. Has broad substrate specificity and catalyzes the epimerization of a variety of dipeptides containing an N-terminal Ala followed by Ser, Thr, Val, Met, His, Phe or Trp (in vitro). This Flavobacterium johnsoniae (strain ATCC 17061 / DSM 2064 / JCM 8514 / BCRC 14874 / CCUG 350202 / NBRC 14942 / NCIMB 11054 / UW101) (Cytophaga johnsonae) protein is L-Ala-D/L-amino acid epimerase.